A 244-amino-acid polypeptide reads, in one-letter code: CTD nuclear envelope phosphatase 1 (244 aa).

The helical transmembrane segment at 7–29 (LLGLRGFVAFAAKLWSFVLYLLR) threads the bilayer. One can recognise an FCP1 homology domain in the interval 58 to 225 (QVKRKVLVLD…NLLPMLDALR (168 aa)).

Belongs to the dullard family. Interacts with bmpr1a, bmpr1b and bmpr2.

It localises to the membrane. It is found in the cytoplasm. Its subcellular location is the perinuclear region. It catalyses the reaction O-phospho-L-seryl-[protein] + H2O = L-seryl-[protein] + phosphate. The catalysed reaction is O-phospho-L-threonyl-[protein] + H2O = L-threonyl-[protein] + phosphate. Serine/threonine protein phosphatase that may dephosphorylate and activate lipins. Lipins are phosphatidate phosphatases that catalyze the conversion of phosphatidic acid to diacylglycerol and control the metabolism of fatty acids at different levels. May indirectly modulate the lipid composition of nuclear and/or endoplasmic reticulum membranes and be required for proper nuclear membrane morphology and/or dynamics. May also indirectly regulate the production of lipid droplets and triacylglycerol. Induces neuronal differentiation by antagonizing BMP signaling. Acts both by dephosphorylating BMPR1A and by promoting BMPR2 proteasomal degradation. This is CTD nuclear envelope phosphatase 1 (ctdnep1) from Xenopus laevis (African clawed frog).